The primary structure comprises 322 residues: Phosphatidylserine decarboxylase proenzyme (322 aa).

Catalysis depends on charge relay system; for autoendoproteolytic cleavage activity residues aspartate 90, histidine 147, and serine 254. The active-site Schiff-base intermediate with substrate; via pyruvic acid; for decarboxylase activity is the serine 254. Pyruvic acid (Ser); by autocatalysis is present on serine 254. Positions proline 293–valine 322 are disordered. The span at glutamate 308–valine 322 shows a compositional bias: basic and acidic residues.

This sequence belongs to the phosphatidylserine decarboxylase family. PSD-B subfamily. Prokaryotic type I sub-subfamily. Heterodimer of a large membrane-associated beta subunit and a small pyruvoyl-containing alpha subunit. The cofactor is pyruvate. In terms of processing, is synthesized initially as an inactive proenzyme. Formation of the active enzyme involves a self-maturation process in which the active site pyruvoyl group is generated from an internal serine residue via an autocatalytic post-translational modification. Two non-identical subunits are generated from the proenzyme in this reaction, and the pyruvate is formed at the N-terminus of the alpha chain, which is derived from the carboxyl end of the proenzyme. The autoendoproteolytic cleavage occurs by a canonical serine protease mechanism, in which the side chain hydroxyl group of the serine supplies its oxygen atom to form the C-terminus of the beta chain, while the remainder of the serine residue undergoes an oxidative deamination to produce ammonia and the pyruvoyl prosthetic group on the alpha chain. During this reaction, the Ser that is part of the protease active site of the proenzyme becomes the pyruvoyl prosthetic group, which constitutes an essential element of the active site of the mature decarboxylase.

It is found in the cell membrane. It carries out the reaction a 1,2-diacyl-sn-glycero-3-phospho-L-serine + H(+) = a 1,2-diacyl-sn-glycero-3-phosphoethanolamine + CO2. It participates in phospholipid metabolism; phosphatidylethanolamine biosynthesis; phosphatidylethanolamine from CDP-diacylglycerol: step 2/2. Catalyzes the formation of phosphatidylethanolamine (PtdEtn) from phosphatidylserine (PtdSer). This Escherichia coli (strain 55989 / EAEC) protein is Phosphatidylserine decarboxylase proenzyme.